The following is a 557-amino-acid chain: Tryptophan 2-monooxygenase (557 aa).

FMN is bound by residues serine 49, glutamate 69, arginine 71, arginine 77, and arginine 98. A substrate-binding site is contributed by arginine 98.

It belongs to the tryptophan 2-monooxygenase family. Monomer. The cofactor is FMN.

The catalysed reaction is L-tryptophan + O2 = indole-3-acetamide + CO2 + H2O. The protein operates within plant hormone metabolism; auxin biosynthesis. The sequence is that of Tryptophan 2-monooxygenase (iaaM) from Pseudomonas savastanoi (Pseudomonas syringae pv. savastanoi).